Here is an 878-residue protein sequence, read N- to C-terminus: Alanine--tRNA ligase (878 aa).

His-568, His-572, Cys-669, and His-673 together coordinate Zn(2+).

This sequence belongs to the class-II aminoacyl-tRNA synthetase family. It depends on Zn(2+) as a cofactor.

It is found in the cytoplasm. It catalyses the reaction tRNA(Ala) + L-alanine + ATP = L-alanyl-tRNA(Ala) + AMP + diphosphate. Catalyzes the attachment of alanine to tRNA(Ala) in a two-step reaction: alanine is first activated by ATP to form Ala-AMP and then transferred to the acceptor end of tRNA(Ala). Also edits incorrectly charged Ser-tRNA(Ala) and Gly-tRNA(Ala) via its editing domain. In Polaromonas sp. (strain JS666 / ATCC BAA-500), this protein is Alanine--tRNA ligase.